The primary structure comprises 306 residues: Mycothiol acetyltransferase (306 aa).

2 consecutive N-acetyltransferase domains span residues 17–163 (VARV…RPMP) and 166–306 (LALS…YRRA). Residue glutamate 48 coordinates 1D-myo-inositol 2-(L-cysteinylamino)-2-deoxy-alpha-D-glucopyranoside. 89–91 (IVV) provides a ligand contact to acetyl-CoA. 1D-myo-inositol 2-(L-cysteinylamino)-2-deoxy-alpha-D-glucopyranoside-binding residues include glutamate 192, lysine 232, and glutamate 239. Residues 243–245 (LGV) and 250–256 (AARGLGS) contribute to the acetyl-CoA site. Position 277 (tyrosine 277) interacts with 1D-myo-inositol 2-(L-cysteinylamino)-2-deoxy-alpha-D-glucopyranoside.

This sequence belongs to the acetyltransferase family. MshD subfamily. Monomer.

It carries out the reaction 1D-myo-inositol 2-(L-cysteinylamino)-2-deoxy-alpha-D-glucopyranoside + acetyl-CoA = mycothiol + CoA + H(+). Functionally, catalyzes the transfer of acetyl from acetyl-CoA to desacetylmycothiol (Cys-GlcN-Ins) to form mycothiol. In Clavibacter michiganensis subsp. michiganensis (strain NCPPB 382), this protein is Mycothiol acetyltransferase.